Consider the following 442-residue polypeptide: tRNA-2-methylthio-N(6)-dimethylallyladenosine synthase (442 aa).

One can recognise an MTTase N-terminal domain in the interval 3–120; it reads KKLYIETHGC…LPEMIDAARI (118 aa). [4Fe-4S] cluster contacts are provided by cysteine 12, cysteine 49, cysteine 83, cysteine 157, cysteine 161, and cysteine 164. The Radical SAM core domain occupies 143-375; the sequence is RIDGPSAYVS…QHRLNQQGFE (233 aa). A TRAM domain is found at 378-442; the sequence is RQMVGSVQRI…PHSLRGSLIQ (65 aa).

It belongs to the methylthiotransferase family. MiaB subfamily. As to quaternary structure, monomer. [4Fe-4S] cluster is required as a cofactor.

Its subcellular location is the cytoplasm. It catalyses the reaction N(6)-dimethylallyladenosine(37) in tRNA + (sulfur carrier)-SH + AH2 + 2 S-adenosyl-L-methionine = 2-methylsulfanyl-N(6)-dimethylallyladenosine(37) in tRNA + (sulfur carrier)-H + 5'-deoxyadenosine + L-methionine + A + S-adenosyl-L-homocysteine + 2 H(+). Functionally, catalyzes the methylthiolation of N6-(dimethylallyl)adenosine (i(6)A), leading to the formation of 2-methylthio-N6-(dimethylallyl)adenosine (ms(2)i(6)A) at position 37 in tRNAs that read codons beginning with uridine. The protein is tRNA-2-methylthio-N(6)-dimethylallyladenosine synthase of Pseudomonas fluorescens (strain Pf0-1).